The primary structure comprises 819 residues: Probable phosphoenolpyruvate synthase (819 aa).

H441 (tele-phosphohistidine intermediate) is an active-site residue. Substrate is bound by residues R540, R587, E684, G706, T707, N708, and D709. E684 contacts Mg(2+). D709 serves as a coordination point for Mg(2+). The Proton donor role is filled by C756.

The protein belongs to the PEP-utilizing enzyme family. Mg(2+) is required as a cofactor.

It catalyses the reaction pyruvate + ATP + H2O = phosphoenolpyruvate + AMP + phosphate + 2 H(+). It functions in the pathway carbohydrate biosynthesis; gluconeogenesis. Functionally, catalyzes the phosphorylation of pyruvate to phosphoenolpyruvate. This chain is Probable phosphoenolpyruvate synthase (ppsA), found in Pyrococcus abyssi (strain GE5 / Orsay).